Reading from the N-terminus, the 166-residue chain is ATP synthase subunit b (166 aa).

Residues 10–30 (LLFWMIVSFGIVFVILSKYGF) form a helical membrane-spanning segment.

This sequence belongs to the ATPase B chain family. In terms of assembly, F-type ATPases have 2 components, F(1) - the catalytic core - and F(0) - the membrane proton channel. F(1) has five subunits: alpha(3), beta(3), gamma(1), delta(1), epsilon(1). F(0) has three main subunits: a(1), b(2) and c(10-14). The alpha and beta chains form an alternating ring which encloses part of the gamma chain. F(1) is attached to F(0) by a central stalk formed by the gamma and epsilon chains, while a peripheral stalk is formed by the delta and b chains.

Its subcellular location is the cell inner membrane. Functionally, f(1)F(0) ATP synthase produces ATP from ADP in the presence of a proton or sodium gradient. F-type ATPases consist of two structural domains, F(1) containing the extramembraneous catalytic core and F(0) containing the membrane proton channel, linked together by a central stalk and a peripheral stalk. During catalysis, ATP synthesis in the catalytic domain of F(1) is coupled via a rotary mechanism of the central stalk subunits to proton translocation. Component of the F(0) channel, it forms part of the peripheral stalk, linking F(1) to F(0). This chain is ATP synthase subunit b, found in Parabacteroides distasonis (strain ATCC 8503 / DSM 20701 / CIP 104284 / JCM 5825 / NCTC 11152).